The primary structure comprises 545 residues: Carboxypeptidase Y homolog A (545 aa).

An N-terminal signal peptide occupies residues 1 to 17 (MKSLALALLVGGAIAAG). The propeptide occupies 18-123 (PQQQVLQAPV…KLEAYDLRVK (106 aa)). Disulfide bonds link Cys-177–Cys-416, Cys-311–Cys-325, Cys-335–Cys-358, Cys-342–Cys-351, and Cys-380–Cys-386. Asn-208 is a glycosylation site (N-linked (GlcNAc...) asparagine). Residue Ser-264 is part of the active site. The active site involves Asp-455. N-linked (GlcNAc...) asparagine glycosylation is found at Asn-485, Asn-491, and Asn-506. His-517 is a catalytic residue.

Belongs to the peptidase S10 family.

The protein resides in the vacuole. The catalysed reaction is Release of a C-terminal amino acid with broad specificity.. In terms of biological role, vacuolar carboxypeptidase involved in degradation of small peptides. Digests preferentially peptides containing an aliphatic or hydrophobic residue in P1' position, as well as methionine, leucine or phenylalanine in P1 position of ester substrate. The chain is Carboxypeptidase Y homolog A (CPYA) from Blastomyces gilchristii (strain SLH14081) (Blastomyces dermatitidis).